The primary structure comprises 195 residues: Phosphoheptose isomerase (195 aa).

Positions 35–195 constitute an SIS domain; that stretch reads LCVALYRGDK…EKEIFGDGVN (161 aa). 51 to 53 is a binding site for substrate; it reads NGG. His-60 and Glu-64 together coordinate Zn(2+). Substrate-binding positions include Glu-64, 93 to 94, 119 to 121, Ser-124, and Gln-171; these read ND and STS. Zn(2+)-binding residues include Gln-171 and His-179.

The protein belongs to the SIS family. GmhA subfamily. As to quaternary structure, homotetramer. Zn(2+) is required as a cofactor.

It is found in the cytoplasm. The catalysed reaction is 2 D-sedoheptulose 7-phosphate = D-glycero-alpha-D-manno-heptose 7-phosphate + D-glycero-beta-D-manno-heptose 7-phosphate. Its pathway is carbohydrate biosynthesis; D-glycero-D-manno-heptose 7-phosphate biosynthesis; D-glycero-alpha-D-manno-heptose 7-phosphate and D-glycero-beta-D-manno-heptose 7-phosphate from sedoheptulose 7-phosphate: step 1/1. In terms of biological role, catalyzes the isomerization of sedoheptulose 7-phosphate in D-glycero-D-manno-heptose 7-phosphate. The sequence is that of Phosphoheptose isomerase from Sulfurimonas denitrificans (strain ATCC 33889 / DSM 1251) (Thiomicrospira denitrificans (strain ATCC 33889 / DSM 1251)).